The sequence spans 38 residues: Bacteriocin BAC79 (38 aa).

Its activity is regulated as follows. The antimicrobial activity of BAC79 was completely lost after treatment with enzymes trypsin, pepsin, proteinase-K, and carboxypeptidase, while there was no loss of activity with either amylase or lipase. In terms of biological role, has antibacterial activity against a wide spectrum of Gram-positive and Gram-negative bacteria, including L.monocytogenes which is inhibited through disruption of the cell membrane. The chain is Bacteriocin BAC79 from Weissella confusa (Lactobacillus confusus).